A 122-amino-acid chain; its full sequence is Large ribosomal subunit protein bL12 (122 aa).

It belongs to the bacterial ribosomal protein bL12 family. As to quaternary structure, homodimer. Part of the ribosomal stalk of the 50S ribosomal subunit. Forms a multimeric L10(L12)X complex, where L10 forms an elongated spine to which 2 to 4 L12 dimers bind in a sequential fashion. Binds GTP-bound translation factors.

In terms of biological role, forms part of the ribosomal stalk which helps the ribosome interact with GTP-bound translation factors. Is thus essential for accurate translation. The chain is Large ribosomal subunit protein bL12 from Latilactobacillus sakei subsp. sakei (strain 23K) (Lactobacillus sakei subsp. sakei).